The primary structure comprises 340 residues: Glycerol-3-phosphate dehydrogenase [NAD(P)+] (340 aa).

NADPH contacts are provided by Trp-11, Arg-33, and Lys-110. Lys-110, Gly-144, and Ser-146 together coordinate sn-glycerol 3-phosphate. Ala-148 is a binding site for NADPH. Positions 199, 252, 262, 263, and 264 each coordinate sn-glycerol 3-phosphate. The active-site Proton acceptor is Lys-199. Arg-263 serves as a coordination point for NADPH. Val-287 and Glu-289 together coordinate NADPH.

It belongs to the NAD-dependent glycerol-3-phosphate dehydrogenase family.

The protein localises to the cytoplasm. It carries out the reaction sn-glycerol 3-phosphate + NAD(+) = dihydroxyacetone phosphate + NADH + H(+). It catalyses the reaction sn-glycerol 3-phosphate + NADP(+) = dihydroxyacetone phosphate + NADPH + H(+). Its pathway is membrane lipid metabolism; glycerophospholipid metabolism. Its function is as follows. Catalyzes the reduction of the glycolytic intermediate dihydroxyacetone phosphate (DHAP) to sn-glycerol 3-phosphate (G3P), the key precursor for phospholipid synthesis. The sequence is that of Glycerol-3-phosphate dehydrogenase [NAD(P)+] from Polynucleobacter asymbioticus (strain DSM 18221 / CIP 109841 / QLW-P1DMWA-1) (Polynucleobacter necessarius subsp. asymbioticus).